The chain runs to 401 residues: Hemorrhagic metalloproteinase-disintegrin-like kaouthiagin (401 aa).

The 195-residue stretch at 14–208 (KYIEFYVIVD…DRPQCILNKP (195 aa)) folds into the Peptidase M12B domain. Ca(2+) contacts are provided by E17 and D101. N112 carries N-linked (GlcNAc...) asparagine glycosylation. 3 cysteine pairs are disulfide-bonded: C125-C203, C164-C187, and C166-C171. Residue H149 participates in Zn(2+) binding. E150 is a catalytic residue. Zn(2+) is bound by residues H153 and H159. Ca(2+) is bound by residues C203, N206, I218, N221, F223, E225, E228, and D231. Residues 216–285 (PAICGNYFVE…ECPTDSLQRN (70 aa)) form the Disintegrin domain. Intrachain disulfides connect C219–C248, C230–C243, C232–C238, C257–C277, C264–C296, C289–C301, C308–C358, C323–C366, C336–C346, C353–C389, and C383–C394. The short motif at 263-265 (DCD) is the D/ECD-tripeptide element. The Ca(2+) site is built by D265, L266, E268, and D280.

This sequence belongs to the venom metalloproteinase (M12B) family. P-III subfamily. P-IIIa sub-subfamily. In terms of assembly, monomer. Requires Zn(2+) as cofactor. As to expression, expressed by the venom gland.

Its subcellular location is the secreted. In terms of biological role, snake venom zinc protease that inhibits hemostasis by binding and cleaving the vWF in humans. Also has and inhibitory effect on the collagen-induced platelet aggregation. The sequence is that of Hemorrhagic metalloproteinase-disintegrin-like kaouthiagin from Naja kaouthia (Monocled cobra).